The following is a 953-amino-acid chain: Atromentin synthetase invA2 (953 aa).

Residues 38 to 460 (RAVSQYPNHE…SGRIKDTVIV (423 aa)) are adenylation (A) domain. One can recognise a Carrier domain in the interval 592–670 (APSTETEKTL…SLAKYVDSLI (79 aa)). Residues 597–667 (TEKTLAGIYA…VISSLAKYVD (71 aa)) are thiolation and peptide carrier (T) domain. Ser629 is subject to O-(pantetheine 4'-phosphoryl)serine. The segment at 693–795 (PIFMVHPGVG…FTGLINIPPH (103 aa)) is thioesterase (TE) domain.

Belongs to the ATP-dependent AMP-binding enzyme family.

The protein operates within secondary metabolite biosynthesis. Its function is as follows. An L-tyrosine:2-oxoglutarate aminotransferase (probably invD) and atromentin synthetase invA2 catalyze consecutive steps to turn over L-tyrosine into atromentin, which represents the generic precursor molecule for the entire terphenylquinone and pulvinic acid family of pigments, which are widely distributed secondary metabolites in homobasidiomycetes. The first step catalyzed by the aminotransferase converts L-tyrosine in to 4-hydroxyphenylpyruvate (4-HPP). Adenylation of two 4-HPP monomers by the invA2 adenylation (A) domain, covalent tethering of the monomers as a thioester and oxoester onto the invA2 thiolation (T) and thioesterase (TE) domains, respectively, and symmetric C-C-bond formation between two monomers catalyzed by the invA2 TE domain leads to atromentin. This is Atromentin synthetase invA2 (invA2) from Paxillus involutus (Naked brimcap).